The chain runs to 344 residues: Small ribosomal subunit protein mS38 (344 aa).

Disordered regions lie at residues 1-27, 43-101, and 325-344; these read MIPQ…ASSA, ALQK…SVPS, and KKYK…QDRL. Positions 51–74 are enriched in low complexity; the sequence is SSKPSSPDDGSSRAFAARASVPAA. The segment covering 325-338 has biased composition (basic residues); it reads KKYKKLMRRTRNER.

Belongs to the mitochondrion-specific ribosomal protein mS38 family. Component of the mitochondrial small ribosomal subunit (mt-SSU). Mature N.crassa 74S mitochondrial ribosomes consist of a small (37S) and a large (54S) subunit. The 37S small subunit contains a 16S ribosomal RNA (16S mt-rRNA) and 32 different proteins. The 54S large subunit contains a 23S rRNA (23S mt-rRNA) and 42 different proteins.

The protein resides in the mitochondrion. Its function is as follows. Component of the mitochondrial ribosome (mitoribosome), a dedicated translation machinery responsible for the synthesis of mitochondrial genome-encoded proteins, including at least some of the essential transmembrane subunits of the mitochondrial respiratory chain. The mitoribosomes are attached to the mitochondrial inner membrane and translation products are cotranslationally integrated into the membrane. The sequence is that of Small ribosomal subunit protein mS38 (cox24) from Neurospora crassa (strain ATCC 24698 / 74-OR23-1A / CBS 708.71 / DSM 1257 / FGSC 987).